The primary structure comprises 133 residues: Fluoride-specific ion channel FluC (133 aa).

A run of 4 helical transmembrane segments spans residues 5 to 25 (VPATSLILWLAVALGGALGAL), 43 to 63 (VATLTVNVLGSFLMGVFYVVI), 76 to 96 (VIMIGFLGAFTTFSTFSIESL), and 108 to 128 (ISYVVANVVLSISAVVVAIVL). The Na(+) site is built by G83 and T86.

It belongs to the fluoride channel Fluc/FEX (TC 1.A.43) family.

It localises to the cell inner membrane. The catalysed reaction is fluoride(in) = fluoride(out). With respect to regulation, na(+) is not transported, but it plays an essential structural role and its presence is essential for fluoride channel function. In terms of biological role, fluoride-specific ion channel. Important for reducing fluoride concentration in the cell, thus reducing its toxicity. This Saccharophagus degradans (strain 2-40 / ATCC 43961 / DSM 17024) protein is Fluoride-specific ion channel FluC.